We begin with the raw amino-acid sequence, 293 residues long: Probable metal transport system membrane protein CT_417 (293 aa).

7 helical membrane-spanning segments follow: residues 18–38, 41–61, 68–88, 101–121, 135–155, 187–207, and 242–262; these read SLLA…YIVV, IVSI…IALW, LPIS…ICIG, IISM…SKLP, ILWV…FIVA, LLLI…GVIL, and FLGI…IAIL.

Belongs to the ABC-3 integral membrane protein family.

The protein resides in the cell inner membrane. Functionally, part of an ATP-driven transport system CT_415/CT_416/CT_417 for a metal. The protein is Probable metal transport system membrane protein CT_417 of Chlamydia trachomatis serovar D (strain ATCC VR-885 / DSM 19411 / UW-3/Cx).